Here is a 461-residue protein sequence, read N- to C-terminus: Bifunctional protein HldE (461 aa).

The tract at residues 1–312 (MLEFLSQQKP…IRSFKSMSFE (312 aa)) is ribokinase. 191–194 (NKKE) contacts ATP. The active site involves aspartate 259. The interval 334–461 (FTNGCFDIVH…KIIEKIKDKK (128 aa)) is cytidylyltransferase.

In the N-terminal section; belongs to the carbohydrate kinase PfkB family. The protein in the C-terminal section; belongs to the cytidylyltransferase family. Homodimer.

It carries out the reaction D-glycero-beta-D-manno-heptose 7-phosphate + ATP = D-glycero-beta-D-manno-heptose 1,7-bisphosphate + ADP + H(+). It catalyses the reaction D-glycero-beta-D-manno-heptose 1-phosphate + ATP + H(+) = ADP-D-glycero-beta-D-manno-heptose + diphosphate. Its pathway is nucleotide-sugar biosynthesis; ADP-L-glycero-beta-D-manno-heptose biosynthesis; ADP-L-glycero-beta-D-manno-heptose from D-glycero-beta-D-manno-heptose 7-phosphate: step 1/4. It functions in the pathway nucleotide-sugar biosynthesis; ADP-L-glycero-beta-D-manno-heptose biosynthesis; ADP-L-glycero-beta-D-manno-heptose from D-glycero-beta-D-manno-heptose 7-phosphate: step 3/4. Functionally, catalyzes the phosphorylation of D-glycero-D-manno-heptose 7-phosphate at the C-1 position to selectively form D-glycero-beta-D-manno-heptose-1,7-bisphosphate. Its function is as follows. Catalyzes the ADP transfer from ATP to D-glycero-beta-D-manno-heptose 1-phosphate, yielding ADP-D-glycero-beta-D-manno-heptose. The polypeptide is Bifunctional protein HldE (Campylobacter jejuni (strain RM1221)).